A 478-amino-acid chain; its full sequence is Zinc metalloproteinase/disintegrin (478 aa).

Positions 1–20 (MIEVLLVTICLAVFPYPGSS) are cleaved as a signal peptide. Positions 21 to 190 (IILESGNVDD…KASQLYLTPE (170 aa)) are excised as a propeptide. Position 191 is a pyrrolidone carboxylic acid (Gln191). The Peptidase M12B domain occupies 197 to 392 (RYIELAIVVD…SKPQCIINAP (196 aa)). Ca(2+)-binding residues include Glu200 and Asp284. Cystine bridges form between Cys308-Cys387, Cys349-Cys371, and Cys351-Cys354. His333 is a binding site for Zn(2+). Glu334 is an active-site residue. Residues His337 and His343 each contribute to the Zn(2+) site. Residues Cys387 and Asn390 each coordinate Ca(2+). Residues 393–410 (LRTDTVSTPVSGNEFLEA) constitute a propeptide that is removed on maturation. Residues 400–478 (TPVSGNEFLE…GQSADCPRNS (79 aa)) form the Disintegrin domain. Cystine bridges form between Cys414–Cys429, Cys416–Cys424, Cys423–Cys446, Cys437–Cys443, Cys442–Cys467, and Cys455–Cys474. Positions 459 to 461 (RGD) match the Cell attachment site motif. Residues 459 to 478 (RGDNPDDRCTGQSADCPRNS) are disordered. Over residues 468-478 (TGQSADCPRNS) the composition is skewed to polar residues.

The protein belongs to the venom metalloproteinase (M12B) family. P-II subfamily. P-IIa sub-subfamily. In terms of assembly, monomer. Zn(2+) serves as cofactor. Post-translationally, not N-glycosylated. As to expression, expressed by the venom gland.

Its subcellular location is the secreted. The catalysed reaction is Cleavage of 3-Asn-|-Gln-4, 10-His-|-Leu-11 and 14-Ala-|-Leu-15 in the insulin B chain, and the bond Z-Gly-Pro-|-Leu-Gly-Pro in a small molecule substrate of microbial collagenase.. Functionally, zinc protease that induces hemorrhage. In terms of biological role, inhibits platelet aggregation induced by ADP, thrombin, and collagen. Acts by inhibiting fibrinogen interaction with platelet receptors GPIIb/GPIIIa (ITGA2B/ITGB3). The polypeptide is Zinc metalloproteinase/disintegrin (Protobothrops flavoviridis (Habu)).